Consider the following 261-residue polypeptide: Tryptophan synthase alpha chain (261 aa).

Catalysis depends on proton acceptor residues Glu-47 and Asp-58.

This sequence belongs to the TrpA family. As to quaternary structure, tetramer of two alpha and two beta chains.

The catalysed reaction is (1S,2R)-1-C-(indol-3-yl)glycerol 3-phosphate + L-serine = D-glyceraldehyde 3-phosphate + L-tryptophan + H2O. It functions in the pathway amino-acid biosynthesis; L-tryptophan biosynthesis; L-tryptophan from chorismate: step 5/5. Functionally, the alpha subunit is responsible for the aldol cleavage of indoleglycerol phosphate to indole and glyceraldehyde 3-phosphate. The sequence is that of Tryptophan synthase alpha chain from Neisseria meningitidis serogroup A / serotype 4A (strain DSM 15465 / Z2491).